Consider the following 162-residue polypeptide: NADH-quinone oxidoreductase subunit I (162 aa).

2 consecutive 4Fe-4S ferredoxin-type domains span residues 53-83 (LRRY…IEAE) and 93-122 (TRYD…ETRI). Positions 63, 66, 69, 73, 102, 105, 108, and 112 each coordinate [4Fe-4S] cluster.

It belongs to the complex I 23 kDa subunit family. As to quaternary structure, NDH-1 is composed of 14 different subunits. Subunits NuoA, H, J, K, L, M, N constitute the membrane sector of the complex. [4Fe-4S] cluster is required as a cofactor.

It localises to the cell inner membrane. The catalysed reaction is a quinone + NADH + 5 H(+)(in) = a quinol + NAD(+) + 4 H(+)(out). In terms of biological role, NDH-1 shuttles electrons from NADH, via FMN and iron-sulfur (Fe-S) centers, to quinones in the respiratory chain. The immediate electron acceptor for the enzyme in this species is believed to be ubiquinone. Couples the redox reaction to proton translocation (for every two electrons transferred, four hydrogen ions are translocated across the cytoplasmic membrane), and thus conserves the redox energy in a proton gradient. The protein is NADH-quinone oxidoreductase subunit I of Dechloromonas aromatica (strain RCB).